Here is a 306-residue protein sequence, read N- to C-terminus: Pantothenate kinase (306 aa).

91-98 (GSVAVGKS) provides a ligand contact to ATP.

It belongs to the prokaryotic pantothenate kinase family.

The protein localises to the cytoplasm. The catalysed reaction is (R)-pantothenate + ATP = (R)-4'-phosphopantothenate + ADP + H(+). The protein operates within cofactor biosynthesis; coenzyme A biosynthesis; CoA from (R)-pantothenate: step 1/5. This is Pantothenate kinase from Streptococcus suis (strain 98HAH33).